The following is a 145-amino-acid chain: Antiholin-like protein LrgA (145 aa).

Helical transmembrane passes span 13–30 (FFHQVIVIALVLFVSKII), 40–62 (GSVIGLVLLFVLLCTGAVKLGEV), 69–91 (LTNNIGLLFVPAGISVVNSLGVI), and 95–117 (PFLIIGLIIVSTILLLICTGYVT).

Belongs to the CidA/LrgA family. LrgA subfamily.

It is found in the cell membrane. Its function is as follows. Inhibits the expression or activity of extracellular murein hydrolases by interacting, possibly with LrgB, with the holin-like proteins CidA and/or CidB. The LrgAB and CidAB proteins may affect the proton motive force of the membrane. May be involved in programmed cell death (PCD), possibly triggering PCD in response to antibiotics and environmental stresses. This Staphylococcus aureus (strain MW2) protein is Antiholin-like protein LrgA.